Reading from the N-terminus, the 712-residue chain is Lactoperoxidase (712 aa).

The N-terminal stretch at 1–21 (MLVCLHLQVFLASVALFEVAA) is a signal peptide. Positions 22-117 (SDTIAQAAST…TDPSLDLTAL (96 aa)) are excised as a propeptide. A glycan (N-linked (GlcNAc...) (complex) asparagine; alternate) is linked at N106. N-linked (GlcNAc...) (hybrid) asparagine; alternate glycosylation occurs at N106. Intrachain disulfides connect C123–C284, C132–C145, C246–C256, and C250–C274. The N-linked (GlcNAc...) (complex) asparagine; alternate glycan is linked to N212. Residue N212 is glycosylated (N-linked (GlcNAc...) (hybrid) asparagine; alternate). D225 provides a ligand contact to heme b. Catalysis depends on H226, which acts as the Proton acceptor. D227 lines the Ca(2+) pocket. Ca(2+) is bound by residues T301, F303, D305, and S307. A Phosphoserine modification is found at S315. A glycan (N-linked (GlcNAc...) (high mannose) asparagine) is linked at N322. C354 and C365 are joined by a disulfide. The N-linked (GlcNAc...) asparagine glycan is linked to N358. E375 contributes to the heme b binding site. An N-linked (GlcNAc...) (complex) asparagine; alternate glycan is attached at N449. N-linked (GlcNAc...) (hybrid) asparagine; alternate glycosylation is present at N449. N449 is a glycosylation site (N-linked (GlcNAc...) (high mannose) asparagine; alternate). H468 contacts heme b. A 3'-nitrotyrosine modification is found at Y482. Cystine bridges form between C573-C630 and C671-C696.

Belongs to the peroxidase family. XPO subfamily. Ca(2+) serves as cofactor. Requires heme b as cofactor. As to expression, mammary gland; milk.

The protein resides in the secreted. It is found in the cytoplasm. The catalysed reaction is 2 a phenolic donor + H2O2 = 2 a phenolic radical donor + 2 H2O. It carries out the reaction thiocyanate + H2O2 + H(+) = hypothiocyanous acid + H2O. It catalyses the reaction iodide + H2O2 = hypoiodite + H2O. Inhibited by small molecule methimazole (MMZ). In terms of biological role, heme-containing oxidoreductase which catalyzes the conversion of thiocyanate (SCN(-)) into antimicrobial agent hypothiocyanous acid (OSCN(-)) in the presence of hydrogen peroxide (H2O2). Also involved in the conversion of iodide (I(-)) into hypoiodite (IO(-)) in the presence of H2O2. Responsible for the inactivation of a wide range of micro-organisms and hence, important component of defense mechanism. Shows antibacterial properties against several Gram-positive bacteria including some Staphylococcus species and Gram-negative bacteria including E.coli, P.aeruginosa and some Salmonella species. Inhibits the growth of several fungi including A.niger, Trichoderma species, C.cassicola, P.meadii and C.salmonicolor. Does not have anti-fungal activity towards C.albicans and Pythium species. May protect the udder from infection and may promote growth in newborns. May be implicated in airway host defense against infection. May contribute to maintaining an appropriate H2O2 cellular level, therefore protecting cells from H2O2-caused injuries and inflammation. The chain is Lactoperoxidase (LPO) from Capra hircus (Goat).